Consider the following 296-residue polypeptide: Protein csh3 (296 aa).

Residues 46–138 (ASPVTAPAAQ…PPSYPGPNTA (93 aa)) form a disordered region. Basic and acidic residues predominate over residues 93–103 (GEKRTPEEPRK). Positions 111 to 124 (QKQSEASSVNSSTE) are enriched in polar residues. The SH3 domain maps to 140-199 (KNVERVLAMYDFPGPDAGDLGFHAGEVIIVLEHVNNDWWRGELNGKEGIFPSNYVRLLED). A disordered region spans residues 202-246 (VKAQPPPPPPQQNYPPAASSSAPPMQYQQTAYPPQQAPYPPVQAY). Pro residues predominate over residues 205 to 214 (QPPPPPPQQN). The segment covering 215–235 (YPPAASSSAPPMQYQQTAYPP) has biased composition (low complexity).

In Schizosaccharomyces pombe (strain 972 / ATCC 24843) (Fission yeast), this protein is Protein csh3 (csh3).